The primary structure comprises 185 residues: Vomeronasal secretory protein 2 (185 aa).

A signal peptide spans 1–19 (MKSLLLTVTLSSLVATLQT). A disulfide bridge links Cys-80 with Cys-172.

It belongs to the calycin superfamily. Lipocalin family. Specifically expressed in vomeronasal and posterior glands of the nasal septum, the ducts of which open into the lumen of the vomeronasal organ.

It is found in the secreted. Functionally, transport of lipophilic molecules, possible pheromone-carrier. The sequence is that of Vomeronasal secretory protein 2 (Lcn4) from Mus musculus (Mouse).